Reading from the N-terminus, the 292-residue chain is Acetyl-coenzyme A carboxylase carboxyl transferase subunit beta (292 aa).

Positions 23–292 (VWSKCTACGN…TEATEVSVNE (270 aa)) constitute a CoA carboxyltransferase N-terminal domain. Residues Cys-27, Cys-30, Cys-46, and Cys-49 each coordinate Zn(2+). The segment at 27–49 (CTACGNIIYKADLERSLNVCPKC) adopts a C4-type zinc-finger fold.

The protein belongs to the AccD/PCCB family. As to quaternary structure, acetyl-CoA carboxylase is a heterohexamer composed of biotin carboxyl carrier protein (AccB), biotin carboxylase (AccC) and two subunits each of ACCase subunit alpha (AccA) and ACCase subunit beta (AccD). Zn(2+) serves as cofactor.

It is found in the cytoplasm. The enzyme catalyses N(6)-carboxybiotinyl-L-lysyl-[protein] + acetyl-CoA = N(6)-biotinyl-L-lysyl-[protein] + malonyl-CoA. The protein operates within lipid metabolism; malonyl-CoA biosynthesis; malonyl-CoA from acetyl-CoA: step 1/1. Functionally, component of the acetyl coenzyme A carboxylase (ACC) complex. Biotin carboxylase (BC) catalyzes the carboxylation of biotin on its carrier protein (BCCP) and then the CO(2) group is transferred by the transcarboxylase to acetyl-CoA to form malonyl-CoA. The polypeptide is Acetyl-coenzyme A carboxylase carboxyl transferase subunit beta (Idiomarina loihiensis (strain ATCC BAA-735 / DSM 15497 / L2-TR)).